Consider the following 473-residue polypeptide: Photosystem II CP43 reaction center protein (473 aa).

Positions 1–14 are excised as a propeptide; it reads MKTLYSRRRFYHVE. Position 15 is an N-acetylthreonine (T15). Phosphothreonine is present on T15. 5 consecutive transmembrane segments (helical) span residues 69 to 93, 134 to 155, 178 to 200, 255 to 275, and 291 to 312; these read LFEVAHFVPEKPMYEQGLILLPHLA, LLGPETLEESFPFFGYVWKDRN, KALYFGGVYDTWAPGGGDVRKIT, KPFAWARRALVWSGEAYLSYS, and WFNNTAYPSEFYGPTGPEASQA. E367 serves as a coordination point for [CaMn4O5] cluster. Residues 447–471 form a helical membrane-spanning segment; that stretch reads RARAAAAGFEKGIDRDFEPVLSMTP.

The protein belongs to the PsbB/PsbC family. PsbC subfamily. As to quaternary structure, PSII is composed of 1 copy each of membrane proteins PsbA, PsbB, PsbC, PsbD, PsbE, PsbF, PsbH, PsbI, PsbJ, PsbK, PsbL, PsbM, PsbT, PsbX, PsbY, PsbZ, Psb30/Ycf12, at least 3 peripheral proteins of the oxygen-evolving complex and a large number of cofactors. It forms dimeric complexes. Binds multiple chlorophylls and provides some of the ligands for the Ca-4Mn-5O cluster of the oxygen-evolving complex. It may also provide a ligand for a Cl- that is required for oxygen evolution. PSII binds additional chlorophylls, carotenoids and specific lipids. serves as cofactor.

The protein localises to the plastid. Its subcellular location is the chloroplast thylakoid membrane. One of the components of the core complex of photosystem II (PSII). It binds chlorophyll and helps catalyze the primary light-induced photochemical processes of PSII. PSII is a light-driven water:plastoquinone oxidoreductase, using light energy to abstract electrons from H(2)O, generating O(2) and a proton gradient subsequently used for ATP formation. The polypeptide is Photosystem II CP43 reaction center protein (Solanum bulbocastanum (Wild potato)).